A 245-amino-acid chain; its full sequence is Polyhedrin (245 aa).

The protein belongs to the polyhedrin family.

Functionally, major component of the virus occlusion bodies, which are large proteinaceous structures (polyhedra), that protect the virus from the outside environment for extended periods until they are ingested by insect larvae. This chain is Polyhedrin, found in Lepidoptera (butterflies and moths).